Reading from the N-terminus, the 830-residue chain is Ribosome biogenesis protein ERB1 (830 aa).

The disordered stretch occupies residues 1-142 (MAPQPLKVGT…NKDLPVDEKL (142 aa)). 2 stretches are compositionally biased toward acidic residues: residues 35–44 (VSEESDEEFG) and 52–109 (MSDD…DSDS). Residues 131-142 (EENKDLPVDEKL) are compositionally biased toward basic and acidic residues. WD repeat units lie at residues 481 to 520 (PGDT…EVWR), 523 to 563 (LHAG…APHI), 660 to 698 (KTPG…LIRT), 701 to 740 (SGVK…KPYK), 744 to 783 (YHNR…DLMQ), and 799 to 830 (IDGI…LWCS).

Belongs to the WD repeat BOP1/ERB1 family. In terms of assembly, component of the NOP7 complex, composed of ERB1, NOP7 and YTM1. The complex is held together by ERB1, which interacts with NOP7 via its N-terminal domain and with YTM1 via a high-affinity interaction between the seven-bladed beta-propeller domains of the 2 proteins. The NOP7 complex associates with the 66S pre-ribosome.

It is found in the nucleus. Its subcellular location is the nucleolus. The protein localises to the nucleoplasm. Functionally, component of the NOP7 complex, which is required for maturation of the 25S and 5.8S ribosomal RNAs and formation of the 60S ribosome. This chain is Ribosome biogenesis protein ERB1, found in Cryptococcus neoformans var. neoformans serotype D (strain JEC21 / ATCC MYA-565) (Filobasidiella neoformans).